An 87-amino-acid polypeptide reads, in one-letter code: MKTKLNELLEFPTPFTYKVMGQALPELVDQVVEVVQRHAPGDYTPTVKPSSKGNYHSVSITINATHIEQVETLYEELGKIDIVRMVL.

Belongs to the UPF0250 family.

The polypeptide is UPF0250 protein YbeD (Shigella boydii serotype 18 (strain CDC 3083-94 / BS512)).